Consider the following 227-residue polypeptide: MMVSLFSQFDSPWLLNIPLVLLALIMPWKLFVSFGPSWAGTRSSRLVYATMETLMSQVMQPLNKLGFRWVVLFSSLMLMLMTLNVIGLFPYTFTPTTQLSMNLGLAVPLWLGTVVYGFRNHPVIALAHLCPEGAPNLLVPVLVVVETLSILMRPLALGLRLTANLTAGHLLMHLISSAVLGLMELSVMLSGITLLLLVFLTMLEIAVALIQGYVFAILVTLYLDENL.

The next 6 helical transmembrane spans lie at 14–34, 69–89, 98–118, 137–157, 169–189, and 205–223; these read LLNI…FVSF, WVVL…IGLF, QLSM…VYGF, LLVP…PLAL, HLLM…SVML, and IAVA…TLYL.

This sequence belongs to the ATPase A chain family. F-type ATPases have 2 components, CF(1) - the catalytic core - and CF(0) - the membrane proton channel. CF(1) has five subunits: alpha(3), beta(3), gamma(1), delta(1), epsilon(1). CF(0) has three main subunits: a, b and c.

The protein resides in the mitochondrion inner membrane. Mitochondrial membrane ATP synthase (F(1)F(0) ATP synthase or Complex V) produces ATP from ADP in the presence of a proton gradient across the membrane which is generated by electron transport complexes of the respiratory chain. F-type ATPases consist of two structural domains, F(1) - containing the extramembraneous catalytic core and F(0) - containing the membrane proton channel, linked together by a central stalk and a peripheral stalk. During catalysis, ATP synthesis in the catalytic domain of F(1) is coupled via a rotary mechanism of the central stalk subunits to proton translocation. Key component of the proton channel; it may play a direct role in the translocation of protons across the membrane. The polypeptide is ATP synthase subunit a (ATP6) (Branchiostoma floridae (Florida lancelet)).